A 206-amino-acid polypeptide reads, in one-letter code: Probable GTP-binding protein EngB (206 aa).

An EngB-type G domain is found at 25 to 198 (SRAEVAFAGR…AVRIEGWLAP (174 aa)). Serine 40 and threonine 62 together coordinate Mg(2+).

The protein belongs to the TRAFAC class TrmE-Era-EngA-EngB-Septin-like GTPase superfamily. EngB GTPase family. Mg(2+) is required as a cofactor.

Functionally, necessary for normal cell division and for the maintenance of normal septation. This is Probable GTP-binding protein EngB from Thiobacillus denitrificans (strain ATCC 25259 / T1).